A 426-amino-acid chain; its full sequence is Squamosa promoter-binding-like protein 10 (426 aa).

An SBP-type zinc finger spans residues 178-255; it reads PPRCQAEGCK…AEHNRRRRKP (78 aa). Positions 181, 186, 203, 206, 222, 225, 229, and 241 each coordinate Zn(2+). The Bipartite nuclear localization signal motif lies at 238-254; it reads KRSCRKRLAEHNRRRRK. Composition is skewed to low complexity over residues 268 to 287 and 401 to 417; these read DAAA…AATS and SDQN…NNNN. Disordered regions lie at residues 268 to 290 and 392 to 426; these read DAAA…SYTG and PSTA…VDFM.

Expressed in stems, leaf sheaths, and young panicles.

The protein resides in the nucleus. Its function is as follows. Trans-acting factor that binds specifically to the consensus nucleotide sequence 5'-TNCGTACAA-3'. In Oryza sativa subsp. indica (Rice), this protein is Squamosa promoter-binding-like protein 10 (SPL10).